The sequence spans 431 residues: Trigger factor (431 aa).

Residues glycine 165–proline 250 enclose the PPIase FKBP-type domain.

It belongs to the FKBP-type PPIase family. Tig subfamily.

It localises to the cytoplasm. The catalysed reaction is [protein]-peptidylproline (omega=180) = [protein]-peptidylproline (omega=0). Involved in protein export. Acts as a chaperone by maintaining the newly synthesized protein in an open conformation. Functions as a peptidyl-prolyl cis-trans isomerase. The chain is Trigger factor from Leuconostoc mesenteroides subsp. mesenteroides (strain ATCC 8293 / DSM 20343 / BCRC 11652 / CCM 1803 / JCM 6124 / NCDO 523 / NBRC 100496 / NCIMB 8023 / NCTC 12954 / NRRL B-1118 / 37Y).